We begin with the raw amino-acid sequence, 311 residues long: HTH-type transcriptional regulator PcaQ (311 aa).

The 58-residue stretch at 6–63 (IKFRHLQTFVEVARQKSVIRAAEILHVSQPAVTKTIRELEDVLGVSLLEREGRGIRIS) folds into the HTH lysR-type domain. Positions 23–42 (VIRAAEILHVSQPAVTKTIR) form a DNA-binding region, H-T-H motif.

The protein belongs to the LysR transcriptional regulatory family.

Activates transcription of the pcaDCHGB operon for the catabolism of the phenolic compound protocatechuate. The chain is HTH-type transcriptional regulator PcaQ (pcaQ) from Agrobacterium fabrum (strain C58 / ATCC 33970) (Agrobacterium tumefaciens (strain C58)).